The chain runs to 242 residues: Biosynthetic peptidoglycan transglycosylase (242 aa).

Residues 19–39 form a helical membrane-spanning segment; the sequence is ILAALAVFWGGGIALFSVVPV.

The protein belongs to the glycosyltransferase 51 family.

It localises to the cell inner membrane. It carries out the reaction [GlcNAc-(1-&gt;4)-Mur2Ac(oyl-L-Ala-gamma-D-Glu-L-Lys-D-Ala-D-Ala)](n)-di-trans,octa-cis-undecaprenyl diphosphate + beta-D-GlcNAc-(1-&gt;4)-Mur2Ac(oyl-L-Ala-gamma-D-Glu-L-Lys-D-Ala-D-Ala)-di-trans,octa-cis-undecaprenyl diphosphate = [GlcNAc-(1-&gt;4)-Mur2Ac(oyl-L-Ala-gamma-D-Glu-L-Lys-D-Ala-D-Ala)](n+1)-di-trans,octa-cis-undecaprenyl diphosphate + di-trans,octa-cis-undecaprenyl diphosphate + H(+). The protein operates within cell wall biogenesis; peptidoglycan biosynthesis. In terms of biological role, peptidoglycan polymerase that catalyzes glycan chain elongation from lipid-linked precursors. The sequence is that of Biosynthetic peptidoglycan transglycosylase from Salmonella typhi.